We begin with the raw amino-acid sequence, 358 residues long: Probable arabinan endo-1,5-alpha-L-arabinosidase B (358 aa).

The first 16 residues, 1–16 (MVLVATLFSLFTVSLC), serve as a signal peptide directing secretion. Residue aspartate 39 is the Proton acceptor of the active site. Residue asparagine 194 is glycosylated (N-linked (GlcNAc...) asparagine). Positions 202–227 (HLAKHPKTERVNSQDQNPDPLCRDSS) are disordered. Glutamate 233 (proton donor) is an active-site residue.

The protein belongs to the glycosyl hydrolase 43 family.

The protein localises to the secreted. The catalysed reaction is Endohydrolysis of (1-&gt;5)-alpha-arabinofuranosidic linkages in (1-&gt;5)-arabinans.. It functions in the pathway glycan metabolism; L-arabinan degradation. Its function is as follows. Endo-1,5-alpha-L-arabinanase involved in degradation of pectin. Its preferred substrate is linear 1,5-alpha-L-arabinan. This is Probable arabinan endo-1,5-alpha-L-arabinosidase B (abnB) from Aspergillus flavus (strain ATCC 200026 / FGSC A1120 / IAM 13836 / NRRL 3357 / JCM 12722 / SRRC 167).